The primary structure comprises 474 residues: Chromosomal replication initiator protein DnaA (474 aa).

The domain I, interacts with DnaA modulators stretch occupies residues 1–91 (MSEELWQRCL…STRASTPAAS (91 aa)). Residues 89 to 138 (AASYFNGSSSSSSNGPITTPAAAPAPRQPESDSRPQPTSLGGARKHRSNL) are disordered. The interval 91–136 (SYFNGSSSSSSNGPITTPAAAPAPRQPESDSRPQPTSLGGARKHRS) is domain II. Positions 96–113 (SSSSSSNGPITTPAAAPA) are enriched in low complexity. The tract at residues 137 to 354 (NLNTGFTFST…GALRRVIAHV (218 aa)) is domain III, AAA+ region. ATP contacts are provided by glycine 182, glycine 184, lysine 185, and threonine 186. Residues 355–474 (RFTGAQIDIG…YLNLLRTLTS (120 aa)) are domain IV, binds dsDNA.

Belongs to the DnaA family. In terms of assembly, oligomerizes as a right-handed, spiral filament on DNA at oriC.

Its subcellular location is the cytoplasm. Its function is as follows. Plays an essential role in the initiation and regulation of chromosomal replication. ATP-DnaA binds to the origin of replication (oriC) to initiate formation of the DNA replication initiation complex once per cell cycle. Binds the DnaA box (a 9 base pair repeat at the origin) and separates the double-stranded (ds)DNA. Forms a right-handed helical filament on oriC DNA; dsDNA binds to the exterior of the filament while single-stranded (ss)DNA is stabiized in the filament's interior. The ATP-DnaA-oriC complex binds and stabilizes one strand of the AT-rich DNA unwinding element (DUE), permitting loading of DNA polymerase. After initiation quickly degrades to an ADP-DnaA complex that is not apt for DNA replication. Binds acidic phospholipids. The chain is Chromosomal replication initiator protein DnaA from Alcanivorax borkumensis (strain ATCC 700651 / DSM 11573 / NCIMB 13689 / SK2).